A 303-amino-acid chain; its full sequence is ATP phosphoribosyltransferase (303 aa).

The protein belongs to the ATP phosphoribosyltransferase family. Long subfamily. Mg(2+) is required as a cofactor.

The protein localises to the cytoplasm. It carries out the reaction 1-(5-phospho-beta-D-ribosyl)-ATP + diphosphate = 5-phospho-alpha-D-ribose 1-diphosphate + ATP. Its pathway is amino-acid biosynthesis; L-histidine biosynthesis; L-histidine from 5-phospho-alpha-D-ribose 1-diphosphate: step 1/9. With respect to regulation, feedback inhibited by histidine. Its function is as follows. Catalyzes the condensation of ATP and 5-phosphoribose 1-diphosphate to form N'-(5'-phosphoribosyl)-ATP (PR-ATP). Has a crucial role in the pathway because the rate of histidine biosynthesis seems to be controlled primarily by regulation of HisG enzymatic activity. In Stenotrophomonas maltophilia (strain R551-3), this protein is ATP phosphoribosyltransferase.